Here is a 320-residue protein sequence, read N- to C-terminus: ATP-dependent 6-phosphofructokinase (320 aa).

Gly-12 lines the ATP pocket. ADP contacts are provided by residues 22 to 26 (RGVVR) and 55 to 60 (RYSVSD). ATP is bound by residues 73-74 (RF) and 103-106 (GDGS). Position 104 (Asp-104) interacts with Mg(2+). Substrate is bound at residue 126–128 (TID). Catalysis depends on Asp-128, which acts as the Proton acceptor. Arg-155 provides a ligand contact to ADP. Substrate contacts are provided by residues Arg-163 and 170–172 (MGR). ADP contacts are provided by residues 186–188 (GCE), Lys-212, and 214–216 (KKH). Substrate-binding positions include Glu-223, Arg-244, and 250-253 (HIQR).

Belongs to the phosphofructokinase type A (PFKA) family. ATP-dependent PFK group I subfamily. Prokaryotic clade 'B1' sub-subfamily. In terms of assembly, homotetramer. The cofactor is Mg(2+).

The protein resides in the cytoplasm. The enzyme catalyses beta-D-fructose 6-phosphate + ATP = beta-D-fructose 1,6-bisphosphate + ADP + H(+). It functions in the pathway carbohydrate degradation; glycolysis; D-glyceraldehyde 3-phosphate and glycerone phosphate from D-glucose: step 3/4. Its activity is regulated as follows. Allosterically activated by ADP and other diphosphonucleosides, and allosterically inhibited by phosphoenolpyruvate. Its function is as follows. Catalyzes the phosphorylation of D-fructose 6-phosphate to fructose 1,6-bisphosphate by ATP, the first committing step of glycolysis. The polypeptide is ATP-dependent 6-phosphofructokinase (Sodalis glossinidius (strain morsitans)).